The following is a 290-amino-acid chain: Thymidylate synthase (290 aa).

DUMP is bound by residues arginine 27 and 152-153 (RR). Cysteine 172 functions as the Nucleophile in the catalytic mechanism. DUMP contacts are provided by residues 192–195 (RSAD), asparagine 203, and 233–235 (HVY). Aspartate 195 contributes to the (6R)-5,10-methylene-5,6,7,8-tetrahydrofolate binding site. Residue alanine 289 participates in (6R)-5,10-methylene-5,6,7,8-tetrahydrofolate binding.

It belongs to the thymidylate synthase family. In terms of assembly, homodimer.

The enzyme catalyses dUMP + (6R)-5,10-methylene-5,6,7,8-tetrahydrofolate = 7,8-dihydrofolate + dTMP. It functions in the pathway pyrimidine metabolism; dTTP biosynthesis. This is Thymidylate synthase (TS) from Ateles.